The following is a 677-amino-acid chain: Transcription factor IIIB 90 kDa subunit (677 aa).

Residues 2-33 form a TFIIB-type zinc finger; the sequence is TGRVCRGCGGTDIELDAARGDAVCTACGSVLE. Residues Cys-6, Cys-9, Cys-25, and Cys-28 each coordinate Zn(2+). 2 tandem repeats follow at residues 91–172 and 185–269. 2 disordered regions span residues 340 to 368 and 385 to 413; these read KGGL…TEDE and LLGG…SLLD. Residue Thr-365 is modified to Phosphothreonine. Ser-450 carries the phosphoserine modification. Disordered stretches follow at residues 501–521 and 544–653; these read YKEH…ASTA and RGLS…EDGE. Residue Ser-553 is modified to Phosphoserine. The segment covering 640-653 has biased composition (acidic residues); it reads EEADEEEPDEEDGE.

This sequence belongs to the TFIIB family. TFIIIB comprises at least the TATA-binding protein (TBP) and the B-related factor 1 (BRF1/TFIIIB90). Interacts with BDP1. Interacts with MAF1.

The protein localises to the nucleus. General activator of RNA polymerase which utilizes different TFIIIB complexes at structurally distinct promoters. The isoform 1 is involved in the transcription of tRNA, adenovirus VA1, 7SL and 5S RNA. Isoform 2 is required for transcription of the U6 promoter. The protein is Transcription factor IIIB 90 kDa subunit (BRF1) of Homo sapiens (Human).